A 218-amino-acid chain; its full sequence is Ribonuclease HII (218 aa).

The RNase H type-2 domain maps to 13–202 (DLVAGVDEVG…VRAAHEARAT (190 aa)). 3 residues coordinate a divalent metal cation: Asp19, Glu20, and Asp111.

This sequence belongs to the RNase HII family. Requires Mn(2+) as cofactor. The cofactor is Mg(2+).

The protein localises to the cytoplasm. The catalysed reaction is Endonucleolytic cleavage to 5'-phosphomonoester.. Its function is as follows. Endonuclease that specifically degrades the RNA of RNA-DNA hybrids. In Pseudomonas syringae pv. syringae (strain B728a), this protein is Ribonuclease HII.